The chain runs to 468 residues: PE family protein PE3 (468 aa).

The PE domain occupies 1–92; it reads MSYVIAAPEM…AGAAYAQAEA (92 aa). One can recognise a PE-PPE domain in the interval 154–375; the sequence is PVAQYTPEQW…DLRVLVDLGY (222 aa).

It belongs to the mycobacterial PE family.

The protein localises to the secreted. It localises to the cell wall. Plays significant roles in mycobacterial persistence during infection and modulates host immune response. The protein is PE family protein PE3 of Mycobacterium tuberculosis (strain ATCC 25618 / H37Rv).